The chain runs to 244 residues: tRNA (guanine-N(7)-)-methyltransferase (244 aa).

Polar residues predominate over residues 1–10 (MSDTPQSPAQ). The disordered stretch occupies residues 1 to 20 (MSDTPQSPAQDSLAEHDEAR). S-adenosyl-L-methionine-binding residues include Glu-74, Glu-99, Asp-126, and Asp-149. Asp-149 is a catalytic residue. Substrate-binding positions include Lys-153, Asp-185, and 222–225 (TKFE).

This sequence belongs to the class I-like SAM-binding methyltransferase superfamily. TrmB family.

The enzyme catalyses guanosine(46) in tRNA + S-adenosyl-L-methionine = N(7)-methylguanosine(46) in tRNA + S-adenosyl-L-homocysteine. It participates in tRNA modification; N(7)-methylguanine-tRNA biosynthesis. In terms of biological role, catalyzes the formation of N(7)-methylguanine at position 46 (m7G46) in tRNA. The chain is tRNA (guanine-N(7)-)-methyltransferase from Pseudomonas paraeruginosa (strain DSM 24068 / PA7) (Pseudomonas aeruginosa (strain PA7)).